We begin with the raw amino-acid sequence, 332 residues long: L-lactate dehydrogenase A chain (332 aa).

NAD(+)-binding positions include 29–57 (GMVG…MEDK) and R99. Residues R106, N138, and R169 each coordinate substrate. N138 serves as a coordination point for NAD(+). The Proton acceptor role is filled by H193. Residue T248 coordinates substrate.

Belongs to the LDH/MDH superfamily. LDH family. Homotetramer.

The protein localises to the cytoplasm. It catalyses the reaction (S)-lactate + NAD(+) = pyruvate + NADH + H(+). The protein operates within fermentation; pyruvate fermentation to lactate; (S)-lactate from pyruvate: step 1/1. Functionally, interconverts simultaneously and stereospecifically pyruvate and lactate with concomitant interconversion of NADH and NAD(+). The protein is L-lactate dehydrogenase A chain (ldha) of Gillichthys seta (Shortjaw mudsucker).